The following is a 669-amino-acid chain: DNA ligase 2 (669 aa).

NAD(+)-binding positions include 35-39 (DKEYD) and 83-84 (SL). Lys-125 serves as the catalytic N6-AMP-lysine intermediate. Residues Arg-147, Glu-181, and Lys-317 each contribute to the NAD(+) site. The Zn(2+) site is built by Cys-410, Cys-413, Cys-426, and Cys-432. The 80-residue stretch at 590–669 (VVENAFTGKT…EEFEQLINNM (80 aa)) folds into the BRCT domain.

This sequence belongs to the NAD-dependent DNA ligase family. LigA subfamily. It depends on Mg(2+) as a cofactor. Mn(2+) is required as a cofactor.

The catalysed reaction is NAD(+) + (deoxyribonucleotide)n-3'-hydroxyl + 5'-phospho-(deoxyribonucleotide)m = (deoxyribonucleotide)n+m + AMP + beta-nicotinamide D-nucleotide.. In terms of biological role, DNA ligase that catalyzes the formation of phosphodiester linkages between 5'-phosphoryl and 3'-hydroxyl groups in double-stranded DNA using NAD as a coenzyme and as the energy source for the reaction. It is essential for DNA replication and repair of damaged DNA. This Clostridium acetobutylicum (strain ATCC 824 / DSM 792 / JCM 1419 / IAM 19013 / LMG 5710 / NBRC 13948 / NRRL B-527 / VKM B-1787 / 2291 / W) protein is DNA ligase 2.